A 213-amino-acid polypeptide reads, in one-letter code: Large ribosomal subunit protein uL1 (213 aa).

It belongs to the universal ribosomal protein uL1 family. As to quaternary structure, part of the 50S ribosomal subunit.

Its function is as follows. Binds directly to 23S rRNA. Probably involved in E site tRNA release. In terms of biological role, protein L1 is also a translational repressor protein, it controls the translation of its operon by binding to its mRNA. The chain is Large ribosomal subunit protein uL1 from Methanococcoides burtonii (strain DSM 6242 / NBRC 107633 / OCM 468 / ACE-M).